Consider the following 280-residue polypeptide: Inhibitor of growth protein 2 (280 aa).

Residues 48–120 are a coiled coil; that stretch reads VLRELDNKYQ…VENRARQMEL (73 aa). Residues 122–204 form a disordered region; that stretch reads SQCFQDPAES…KQEREASPVE (83 aa). Basic and acidic residues predominate over residues 130–140; sequence ESERASDKAKM. Residues 181-193 are compositionally biased toward basic residues; that stretch reads KKSKSAKKKKRSK. K195 is covalently cross-linked (Glycyl lysine isopeptide (Lys-Gly) (interchain with G-Cter in SUMO1)). A PHD-type zinc finger spans residues 212–261; the sequence is PTYCLCNQVSYGEMIGCDNEQCPIEWFHFSCVSLTYKPKGKWYCPKCRGD. Positions 215, 217, 228, 233, 239, 242, 255, and 258 each coordinate Zn(2+). Residues 258-274 show a composition bias toward basic and acidic residues; that stretch reads CRGDNEKTMDKSTEKTK. Positions 258–280 are disordered; it reads CRGDNEKTMDKSTEKTKKDRRSR. The tract at residues 264–280 is PBR; that stretch reads KTMDKSTEKTKKDRRSR.

Belongs to the ING family. As to quaternary structure, interacts with H3K4me3 and to a lesser extent with H3K4me2. Component of a mSin3A-like complex at least consisting of SIN3A, HDAC1, HDAC2, RBBP4/RbAp48, RBBP7/RbAp46, SAP30 and ING2. Sumoylation enhances its association with SIN3A and is required for binding to some target gene promoters, this is the case for TMEM71. Widely expressed. Higher expressed in colon-cancer tumor than in normal colon tissues.

It localises to the nucleus. In terms of biological role, seems to be involved in p53/TP53 activation and p53/TP53-dependent apoptotic pathways, probably by enhancing acetylation of p53/TP53. Component of a mSin3A-like corepressor complex, which is probably involved in deacetylation of nucleosomal histones. ING2 activity seems to be modulated by binding to phosphoinositides (PtdInsPs). The protein is Inhibitor of growth protein 2 (ING2) of Homo sapiens (Human).